We begin with the raw amino-acid sequence, 311 residues long: Probable cell division protein WhiA (311 aa).

A DNA-binding region (H-T-H motif) is located at residues 277 to 311 (TLKEVADQIPDGPISKSGVNHRFKKLHEIAESLRE).

Belongs to the WhiA family.

Involved in cell division and chromosome segregation. The chain is Probable cell division protein WhiA from Lactobacillus acidophilus (strain ATCC 700396 / NCK56 / N2 / NCFM).